Here is an 86-residue protein sequence, read N- to C-terminus: Putative membrane protein insertion efficiency factor (86 aa).

This sequence belongs to the UPF0161 family.

It localises to the cell inner membrane. Could be involved in insertion of integral membrane proteins into the membrane. The chain is Putative membrane protein insertion efficiency factor from Haemophilus influenzae (strain 86-028NP).